The chain runs to 354 residues: 3'-5' exonuclease (354 aa).

Positions 1 to 120 (MEKYLIKMPI…PSPEKEKPEK (120 aa)) are disordered. Composition is skewed to basic and acidic residues over residues 13–23 (KASEVPKDKAV), 36–50 (TKND…KENA), and 71–91 (KNLD…ENPP). Phosphoserine occurs at positions 104, 110, and 112. A 3'-5' exonuclease domain is found at 146 to 314 (VLQWVEKQKD…GQVIYRELER (169 aa)). Positions 163, 165, and 301 each coordinate Mg(2+).

This sequence belongs to the WRNexo family.

Its subcellular location is the nucleus. In terms of biological role, has exonuclease activity on both single-stranded and duplex templates bearing overhangs, but not blunt ended duplex DNA, and cleaves in a 3'-5' direction. Essential for the formation of DNA replication focal centers. Has an important role in maintaining genome stability. This Drosophila erecta (Fruit fly) protein is 3'-5' exonuclease.